A 475-amino-acid chain; its full sequence is MRPLDENLRTSAASRPAQSLSVRGQPEAESGAFGEAIADAGRRRTQGQGGRTSADDPRRDSVANGGNASAVPKADGFGADVPASMADAASPDARPASERAITTRDQAAKRLQHGHPAGTTPLSLGRDGAGEETAEPVEPAAAHSRETVHALRDAIDEASGMTATEGDENAEPVGGTVSDLLSMLTGAAPAVAAALQPEGRAKPASAVRDGSDGPAKAVGGISPDVADGAHPQTGDGTGGSEPDRLFRFARADGKGQVVSMSISRDGERAVVENSRSSVKPGVETVTVLEARRYLGLAVNENATSVTTAIAGDSGWAEALQSSAATTKPEAWSQAGKTLNTLKIQMHPVDLGMVTATLRLKDDELQVDLKVETGEAFRQLRDDQSEMVKALRAQGFAVDQVNIVFNGGGDSASGGGGQSQAQAQLGYEGRERAGDDGQGRQPRDGGRAATERWAGNDATDDVPDGAERSRAGHVYM.

3 disordered regions span residues 1 to 175, 195 to 243, and 408 to 475; these read MRPL…PVGG, LQPE…SEPD, and GDSA…HVYM. The span at 9 to 22 shows a compositional bias: polar residues; sequence RTSAASRPAQSLSV. The segment covering 79 to 100 has biased composition (low complexity); the sequence is ADVPASMADAASPDARPASERA. The segment covering 143–155 has biased composition (basic and acidic residues); sequence HSRETVHALRDAI. The span at 408-417 shows a compositional bias: gly residues; sequence GDSASGGGGQ. A compositionally biased stretch (basic and acidic residues) spans 427–449; the sequence is EGRERAGDDGQGRQPRDGGRAAT.

The protein localises to the cytoplasm. Its function is as follows. Required for the rotation of the flagellar motor. Has a positive effect as flagellar rotation increases when an excess of motd is present. This is Chemotaxis protein MotD (motD) from Rhizobium meliloti (Ensifer meliloti).